The primary structure comprises 1162 residues: Carbamoyl phosphate synthase large chain (1162 aa).

A carboxyphosphate synthetic domain region spans residues 1-456; the sequence is MPKRTDIKSI…SLQKALRGLE (456 aa). The ATP site is built by Arg129, Arg222, Gly228, Gly229, Glu261, Val263, Glu268, Gly294, Val295, His296, Gln338, and Glu352. In terms of domain architecture, ATP-grasp 1 spans 186-381; that stretch reads ETEWQLGEVE…IAKVAAKLAV (196 aa). Gln338, Glu352, and Asn354 together coordinate Mg(2+). 3 residues coordinate Mn(2+): Gln338, Glu352, and Asn354. Residues 457–613 form an oligomerization domain region; it reads TGLTGFDEIA…PFVGQPRSEA (157 aa). Residues 614–1025 are carbamoyl phosphate synthetic domain; that stretch reads EVSDRKKVVI…AFAKAQLGAG (412 aa). Positions 742 to 954 constitute an ATP-grasp 2 domain; that stretch reads QKLLIKLDLN…IAKVAARIMA (213 aa). Residues Arg778, Thr838, Leu840, Glu845, Gly870, Ile871, His872, Ser873, Gln913, and Glu925 each contribute to the ATP site. Gln913, Glu925, and Asn927 together coordinate Mg(2+). Mn(2+) contacts are provided by Gln913, Glu925, and Asn927. The MGS-like domain maps to 1026–1162; sequence VELPREGTVF…VRPLQDYFRS (137 aa). The allosteric domain stretch occupies residues 1026–1162; it reads VELPREGTVF…VRPLQDYFRS (137 aa).

This sequence belongs to the CarB family. As to quaternary structure, composed of two chains; the small (or glutamine) chain promotes the hydrolysis of glutamine to ammonia, which is used by the large (or ammonia) chain to synthesize carbamoyl phosphate. Tetramer of heterodimers (alpha,beta)4. Mg(2+) is required as a cofactor. Mn(2+) serves as cofactor.

The catalysed reaction is hydrogencarbonate + L-glutamine + 2 ATP + H2O = carbamoyl phosphate + L-glutamate + 2 ADP + phosphate + 2 H(+). It catalyses the reaction hydrogencarbonate + NH4(+) + 2 ATP = carbamoyl phosphate + 2 ADP + phosphate + 2 H(+). It participates in amino-acid biosynthesis; L-arginine biosynthesis; carbamoyl phosphate from bicarbonate: step 1/1. Its pathway is pyrimidine metabolism; UMP biosynthesis via de novo pathway; (S)-dihydroorotate from bicarbonate: step 1/3. Its function is as follows. Large subunit of the glutamine-dependent carbamoyl phosphate synthetase (CPSase). CPSase catalyzes the formation of carbamoyl phosphate from the ammonia moiety of glutamine, carbonate, and phosphate donated by ATP, constituting the first step of 2 biosynthetic pathways, one leading to arginine and/or urea and the other to pyrimidine nucleotides. The large subunit (synthetase) binds the substrates ammonia (free or transferred from glutamine from the small subunit), hydrogencarbonate and ATP and carries out an ATP-coupled ligase reaction, activating hydrogencarbonate by forming carboxy phosphate which reacts with ammonia to form carbamoyl phosphate. The sequence is that of Carbamoyl phosphate synthase large chain from Brucella suis biovar 1 (strain 1330).